Consider the following 252-residue polypeptide: MGGLPTLRIEPVPLERKVRPGDDLAELIAESAELEEGDVLAIAHTVVSKAEGALISLDEIEPSPFAKTLAERTGKDPRVVEVILREAESIVRVGPDFIITEVRGGMVCANAGVDESNAPPGYVIVLPEDPDRSARELRRRLRELVGVDVGVIITDTQGRPFREGVVGVAIGASGVPVLADRRGDRDLYGRELKITIVALGDLLASAAELVMGQADEGTPAVIFRGLKPELERFEGPRKARAIIRSPSRDIFR.

GTP is bound by residues 12–15 (VPLE), 44–45 (HT), and K49. D114 provides a ligand contact to a divalent metal cation. Position 117 (N117) interacts with GTP. A divalent metal cation is bound by residues D155, T156, and Q213. GTP is bound at residue 211-218 (MGQADEGT).

Belongs to the CofE family. In terms of assembly, homodimer. Mg(2+) is required as a cofactor. The cofactor is Mn(2+). Requires K(+) as cofactor.

It carries out the reaction oxidized coenzyme F420-0 + GTP + L-glutamate = oxidized coenzyme F420-1 + GDP + phosphate + H(+). The catalysed reaction is oxidized coenzyme F420-1 + GTP + L-glutamate = oxidized coenzyme F420-2 + GDP + phosphate + H(+). It participates in cofactor biosynthesis; coenzyme F420 biosynthesis. Its function is as follows. Catalyzes the GTP-dependent successive addition of two or more gamma-linked L-glutamates to the L-lactyl phosphodiester of 7,8-didemethyl-8-hydroxy-5-deazariboflavin (F420-0) to form coenzyme F420-0-glutamyl-glutamate (F420-2) or polyglutamated F420 derivatives. This chain is Coenzyme F420:L-glutamate ligase, found in Methanopyrus kandleri (strain AV19 / DSM 6324 / JCM 9639 / NBRC 100938).